The following is a 377-amino-acid chain: MKAMVSNASGGYCLNSAMPQPSPMPGMMLVRVEAVALNPYDTKVIEYGIITPEPYVGGCDFAGVVVAAGPGVTRFQPGDPVLSMHTRGGFAEYALAFEDMSCHIPKGMSYNEACSLGLGIGISGLALFQQPGLNLPLQHGQDLSDMTGNGRSNGYTNGHTNGHTNGHSKGEEEQKDPVIVLVAGGASASGTMATQLLKLAGYNPIVTCSPANNSLCESFGASACFDYNSTTCGADIRLHTDNSLAYVVDCVTNVATMTMCYEAIGTQGGTYIALDATANTVKYTRRDVRADWVMANTLLGEPCKLDGVYGRSSAPEHREFASHFFRLAERWLAEGKIRNHPLEIRTGGLESVDAGLQDLRDGVIRGKKLVVPLHVGA.

Residues 7–370 (NASGGYCLNS…DGVIRGKKLV (364 aa)) enclose the Enoyl reductase (ER) domain. The disordered stretch occupies residues 143-173 (LSDMTGNGRSNGYTNGHTNGHTNGHSKGEEE). Positions 144–155 (SDMTGNGRSNGY) are enriched in polar residues. Residues 156–167 (TNGHTNGHTNGH) are compositionally biased toward low complexity. Residues 186-189 (ASAS), 209-212 (SPAN), tyrosine 227, and 274-275 (LD) contribute to the NADP(+) site.

Belongs to the zinc-containing alcohol dehydrogenase family.

It functions in the pathway secondary metabolite biosynthesis. Functionally, trans-enoyl reductase; part of the gene cluster that mediates the biosynthesis of fusamarins, isocoumarin derivatives that show moderate cytotoxicity with IC(50) values between 1 and 50 uM. The polyketide synthase FMN1 probably synthesizes two different polyketides, a tetra- and a pentaketide, containinga varying number of double bonds depending on the selective actions of the trans-enoyl reductase FMN2. Chain fusion will presumably be mediated by the KS domain before finally offloading is catalyzed by the alpha/beta hydrolase fold enzyme FMN3. The sequence is that of Trans-enoyl reductase FMN2 from Fusarium mangiferae (Mango malformation disease fungus).